Consider the following 294-residue polypeptide: RNA exonuclease 4 (294 aa).

A compositionally biased stretch (polar residues) spans Met-1–Ser-13. The tract at residues Met-1–Ser-56 is disordered. A compositionally biased stretch (basic residues) spans Lys-23–Ser-38. Residues Tyr-119 to Tyr-271 form the Exonuclease domain.

It belongs to the REXO4 family.

It localises to the nucleus. Its function is as follows. Exoribonuclease involved in ribosome biosynthesis. Involved in the processing of ITS1, the internal transcribed spacer localized between the 18S and 5.8S rRNAs. This chain is RNA exonuclease 4 (REX4), found in Kluyveromyces lactis (strain ATCC 8585 / CBS 2359 / DSM 70799 / NBRC 1267 / NRRL Y-1140 / WM37) (Yeast).